Reading from the N-terminus, the 179-residue chain is Inosine/xanthosine triphosphatase (179 aa).

Glutamate 71 contributes to the Mg(2+) binding site. 71-72 lines the substrate pocket; sequence EA.

It belongs to the YjjX NTPase family. In terms of assembly, homodimer. Mg(2+) serves as cofactor. It depends on Mn(2+) as a cofactor.

The enzyme catalyses XTP + H2O = XDP + phosphate + H(+). The catalysed reaction is ITP + H2O = IDP + phosphate + H(+). In terms of biological role, phosphatase that hydrolyzes non-canonical purine nucleotides such as XTP and ITP to their respective diphosphate derivatives. Probably excludes non-canonical purines from DNA/RNA precursor pool, thus preventing their incorporation into DNA/RNA and avoiding chromosomal lesions. The polypeptide is Inosine/xanthosine triphosphatase (Shewanella oneidensis (strain ATCC 700550 / JCM 31522 / CIP 106686 / LMG 19005 / NCIMB 14063 / MR-1)).